Reading from the N-terminus, the 353-residue chain is Guanine nucleotide-binding protein alpha-3 subunit (353 aa).

Gly2 carries the N-myristoyl glycine lipid modification. A lipid anchor (S-palmitoyl cysteine) is attached at Cys4. Positions 32–353 (KVVKLLLLGA…IQANLQGCGL (322 aa)) constitute a G-alpha domain. The interval 35 to 48 (KLLLLGAGECGKST) is G1 motif. GTP contacts are provided by residues 40 to 47 (GAGECGKS), 176 to 182 (LLSRIKT), 201 to 205 (DVGGQ), 270 to 273 (NKKD), and Ala326. Mg(2+)-binding residues include Ser47 and Thr182. A G2 motif region spans residues 174-182 (DILLSRIKT). Residues 197-206 (FRVFDVGGQR) are G3 motif. Residues 266–273 (ILFLNKKD) form a G4 motif region. The tract at residues 324–329 (TCATDT) is G5 motif.

This sequence belongs to the G-alpha family. G(q) subfamily. As to quaternary structure, g proteins are composed of 3 units; alpha, beta and gamma. The alpha chain contains the guanine nucleotide binding site.

Its function is as follows. Guanine nucleotide-binding proteins (G proteins) are involved as modulators or transducers in various transmembrane signaling systems. Promotes transcription of 3',5'-cyclic phosphodiesterases pde-1 and pde-5, leading to reduced cGMP levels in sensory neurons. This causes suppression of insulin production and signaling which leads to increased daf-16 activity and contributes to increased adult lifespan and resistance to oxidative stress. In addition, by reducing cGMP levels, inhibits TGF-beta signaling pathways. Involved in behavioral response to P.aeruginosa by controlling the expression of daf-7, a member of the TGF-beta family, in ASJ sensory neurons. Plays a role in the avoidance response to the noxious chemical quinine in ASH sensory neurons. The protein is Guanine nucleotide-binding protein alpha-3 subunit of Caenorhabditis elegans.